Reading from the N-terminus, the 230-residue chain is Orotidine 5'-phosphate decarboxylase (230 aa).

Substrate contacts are provided by residues Asp-11, Lys-34, 61–70, Thr-117, Arg-179, Gln-188, Gly-208, and Arg-209; that span reads DLKLHDIPNT. Residue Lys-63 is the Proton donor of the active site.

Belongs to the OMP decarboxylase family. Type 1 subfamily. Homodimer.

It carries out the reaction orotidine 5'-phosphate + H(+) = UMP + CO2. The protein operates within pyrimidine metabolism; UMP biosynthesis via de novo pathway; UMP from orotate: step 2/2. Functionally, catalyzes the decarboxylation of orotidine 5'-monophosphate (OMP) to uridine 5'-monophosphate (UMP). This chain is Orotidine 5'-phosphate decarboxylase, found in Streptococcus pyogenes serotype M18 (strain MGAS8232).